A 513-amino-acid polypeptide reads, in one-letter code: Bifunctional purine biosynthesis protein PurH (513 aa).

The MGS-like domain occupies 1-144 (MSKRALISVS…KNHERVGIVV (144 aa)).

The protein belongs to the PurH family.

The enzyme catalyses (6R)-10-formyltetrahydrofolate + 5-amino-1-(5-phospho-beta-D-ribosyl)imidazole-4-carboxamide = 5-formamido-1-(5-phospho-D-ribosyl)imidazole-4-carboxamide + (6S)-5,6,7,8-tetrahydrofolate. It carries out the reaction IMP + H2O = 5-formamido-1-(5-phospho-D-ribosyl)imidazole-4-carboxamide. It participates in purine metabolism; IMP biosynthesis via de novo pathway; 5-formamido-1-(5-phospho-D-ribosyl)imidazole-4-carboxamide from 5-amino-1-(5-phospho-D-ribosyl)imidazole-4-carboxamide (10-formyl THF route): step 1/1. The protein operates within purine metabolism; IMP biosynthesis via de novo pathway; IMP from 5-formamido-1-(5-phospho-D-ribosyl)imidazole-4-carboxamide: step 1/1. The chain is Bifunctional purine biosynthesis protein PurH from Moorella thermoacetica (strain ATCC 39073 / JCM 9320).